The sequence spans 376 residues: Chaperone protein DnaJ (376 aa).

Residues D5 to G70 enclose the J domain. Residues G136–T214 form a CR-type zinc finger. Residues C149, C152, C166, C169, C188, C191, C202, and C205 each contribute to the Zn(2+) site. CXXCXGXG motif repeat units lie at residues C149–G156, C166–G173, C188–G195, and C202–G209.

This sequence belongs to the DnaJ family. As to quaternary structure, homodimer. Requires Zn(2+) as cofactor.

It localises to the cytoplasm. Functionally, participates actively in the response to hyperosmotic and heat shock by preventing the aggregation of stress-denatured proteins and by disaggregating proteins, also in an autonomous, DnaK-independent fashion. Unfolded proteins bind initially to DnaJ; upon interaction with the DnaJ-bound protein, DnaK hydrolyzes its bound ATP, resulting in the formation of a stable complex. GrpE releases ADP from DnaK; ATP binding to DnaK triggers the release of the substrate protein, thus completing the reaction cycle. Several rounds of ATP-dependent interactions between DnaJ, DnaK and GrpE are required for fully efficient folding. Also involved, together with DnaK and GrpE, in the DNA replication of plasmids through activation of initiation proteins. The chain is Chaperone protein DnaJ from Burkholderia mallei (strain NCTC 10229).